The primary structure comprises 2052 residues: Unconventional myosin-X (2052 aa).

An N-acetylmethionine modification is found at Met-1. Residues 63 to 739 (EGVDDMATLT…LEQKLEKRQE (677 aa)) enclose the Myosin motor domain. ATP is bound by residues Asn-104, Tyr-113, 160-165 (GAGKTE), and Asn-215. Residues 619–641 (LHSLMATLSASNPFFVRCIKPNM) form an actin-binding region. 3 IQ domains span residues 742 to 763 (VTRA…KQYK), 764 to 787 (KVLD…RFLH), and 788 to 817 (LKKA…EKRA). The interval 814–884 (EKRAEEEKRK…LSRELEKQKE (71 aa)) is SAH. Residues 819-843 (EEKRKREEEEKRKREEEERERERER) form a disordered region. Positions 885–935 (NKQVEEILRLEKEIEDLQRMKERQELSLTEASLQKLQQLRDEELRRLEDEA) form a coiled coil. Ser-963 and Ser-966 each carry phosphoserine. The segment at 964 to 1093 (VGSGCTGEQG…DYDQDDYEDG (130 aa)) is disordered. The span at 988 to 1003 (PEEEEVDEGFEADDDA) shows a compositional bias: acidic residues. Residues 1040-1049 (VVPTSPSADS) show a composition bias toward polar residues. Residues 1081–1092 (GDYDYDQDDYED) are compositionally biased toward acidic residues. Phosphothreonine is present on Thr-1152. PH domains lie at 1206–1304 (EALK…QVHA) and 1386–1491 (EFIV…NVTD). The region spanning 1541 to 1689 (LPYGDINLNL…PSRDEIEALI (149 aa)) is the MyTH4 domain. Residues 1694-2038 (MTSTVHCHGG…AYISMIVKKR (345 aa)) enclose the FERM domain.

It belongs to the TRAFAC class myosin-kinesin ATPase superfamily. Myosin family. In terms of assembly, monomer, when in an inactive conformation in the cytosol. Homodimer in its active, membrane-bound conformation; antiparallel coiled coil-mediated dimer formation. Interacts with ECPAS. Interacts with NEO 1. Interacts with VASP. Interacts with DCC and ITGB5; the presence of DCC inhibits ITGB5 binding. Interacts with tubulin; ITGB5 or DCC binding inhibits tubulin binding. Interacts strongly with CALM3 and weakly with CALM, the CALM3 interaction is essential for function in filopodial extension and motility. Interacts with ITGB1, ITGB3 and ITGB5. Detected in kidney, testis, liver, kidney, cerebellum and brain cortex (at protein level).

The protein resides in the cytoplasm. It localises to the cytosol. The protein localises to the cell projection. Its subcellular location is the lamellipodium. It is found in the ruffle. The protein resides in the cytoskeleton. It localises to the filopodium tip. The protein localises to the cell cortex. Its subcellular location is the filopodium membrane. Myosins are actin-based motor molecules with ATPase activity. Unconventional myosins serve in intracellular movements. MYO10 binds to actin filaments and actin bundles and functions as a plus end-directed motor. Moves with higher velocity and takes larger steps on actin bundles than on single actin filaments. The tail domain binds to membranous compartments containing phosphatidylinositol 3,4,5-trisphosphate, which are then moved relative to actin filaments. Regulates cell shape, cell spreading and cell adhesion. Stimulates the formation and elongation of filopodia. In hippocampal neurons it induces the formation of dendritic filopodia by trafficking the actin-remodeling protein VASP to the tips of filopodia, where it promotes actin elongation. Plays a role in formation of the podosome belt in osteoclasts. The protein is Unconventional myosin-X (MYO10) of Bos taurus (Bovine).